The sequence spans 351 residues: UPF0421 protein BC_2748 (351 aa).

4 helical membrane passes run 19-39, 74-94, 109-129, and 131-151; these read IAVF…IFAV, FTFF…FTIV, TLTA…AFLI, and LATT…IFPP.

It belongs to the UPF0421 family.

Its subcellular location is the cell membrane. This is UPF0421 protein BC_2748 from Bacillus cereus (strain ATCC 14579 / DSM 31 / CCUG 7414 / JCM 2152 / NBRC 15305 / NCIMB 9373 / NCTC 2599 / NRRL B-3711).